The sequence spans 133 residues: Aspartate 1-decarboxylase (133 aa).

Catalysis depends on serine 26, which acts as the Schiff-base intermediate with substrate; via pyruvic acid. A Pyruvic acid (Ser) modification is found at serine 26. Threonine 58 provides a ligand contact to substrate. Catalysis depends on tyrosine 59, which acts as the Proton donor. Residue 74 to 76 (GAA) coordinates substrate.

The protein belongs to the PanD family. As to quaternary structure, heterooctamer of four alpha and four beta subunits. It depends on pyruvate as a cofactor. Is synthesized initially as an inactive proenzyme, which is activated by self-cleavage at a specific serine bond to produce a beta-subunit with a hydroxyl group at its C-terminus and an alpha-subunit with a pyruvoyl group at its N-terminus.

The protein resides in the cytoplasm. The enzyme catalyses L-aspartate + H(+) = beta-alanine + CO2. It functions in the pathway cofactor biosynthesis; (R)-pantothenate biosynthesis; beta-alanine from L-aspartate: step 1/1. In terms of biological role, catalyzes the pyruvoyl-dependent decarboxylation of aspartate to produce beta-alanine. The sequence is that of Aspartate 1-decarboxylase from Legionella pneumophila subsp. pneumophila (strain Philadelphia 1 / ATCC 33152 / DSM 7513).